The primary structure comprises 315 residues: Probable integrase/recombinase aq_aa09 (315 aa).

The Core-binding (CB) domain occupies 1–78 (MEHFIDTYLY…EVRLFYEWLQ (78 aa)). One can recognise a Tyr recombinase domain in the interval 106–313 (SKKKYYSDDE…REKQLEAILE (208 aa)). Residues Arg-150, Lys-186, His-263, Arg-266, and His-289 contribute to the active site. Tyr-299 acts as the O-(3'-phospho-DNA)-tyrosine intermediate in catalysis.

It belongs to the 'phage' integrase family.

May function as an integrase. This Aquifex aeolicus (strain VF5) protein is Probable integrase/recombinase aq_aa09.